We begin with the raw amino-acid sequence, 247 residues long: ATP synthase subunit C lysine N-methyltransferase (247 aa).

Met1 carries the post-translational modification N-acetylmethionine. Residues 1–12 show a composition bias toward basic and acidic residues; it reads MERVGTPEEERQ. The disordered stretch occupies residues 1–25; sequence MERVGTPEEERQAGPVLPTSLESDS. Residues 34–54 form a helical membrane-spanning segment; that stretch reads LITGVVGGALLTVYAVATPFI. Residues 51–85 are required for mitochondrial location; that stretch reads TPFITPALRKVCLPFVPATSKQVENVVRMLRHRRG. Residues 209-247 form a disordered region; the sequence is QRGRGGRPNQEWVGQKNLSETAGLQASSSETRSKLLDVE. Residues 224–238 are compositionally biased toward polar residues; the sequence is KNLSETAGLQASSSE.

It belongs to the ANT/ATPSC lysine N-methyltransferase family. Ubiquitously expressed.

The protein localises to the mitochondrion membrane. The catalysed reaction is L-lysyl-[protein] + 3 S-adenosyl-L-methionine = N(6),N(6),N(6)-trimethyl-L-lysyl-[protein] + 3 S-adenosyl-L-homocysteine + 3 H(+). Functionally, mitochondrial protein-lysine N-methyltransferase that trimethylates ATP synthase subunit C, ATP5MC1 and ATP5MC2. Trimethylation is required for proper incorporation of the C subunit into the ATP synthase complex and mitochondrial respiration. Promotes chronic pain. Involved in persistent inflammatory and neuropathic pain: methyltransferase activity in the mitochondria of sensory neurons promotes chronic pain via a pathway that depends on the production of reactive oxygen species (ROS) and on the engagement of spinal cord microglia. This Mus musculus (Mouse) protein is ATP synthase subunit C lysine N-methyltransferase.